Here is a 743-residue protein sequence, read N- to C-terminus: MEQTYQYAWIIPFLPLPVPMLIGVGLLLFPTATKSLRRMWAFQSVLLLSIVMIFSMNLSIHQINSSSVYQYVWSWIINNDFSLEFGYLIDPLTSIMSILITTVGILVLIYSDNYMSHDHGYLRFFAYMSFFSTSMLGLVTSSNLIQIYIFWELVGICSYLLIGFWFTRPVAAKACQKAFVTNRVGDFGLLLGILGFYWITGSFEFRDLFQIFNNLISNNEVNFLFVTLCAVLLFAGAIAKSAQFPLHVWLPDAMEGPTPISALIHAATMVAAGIFLVARLMPLFIVIPHIMNFISLIGIITVFLGATLALAQKDIKRGLAYSTMSQLGYMMLALGMGSYRSALFHLITHAYSKALLFLGSGSVIHSMETLVGYCPKKSQNMVLMGGLTKHVPITKISFLLGTLSLCGIPPLACFWSKDEILNDSWLYSPIFAIIAWSTAGLTAFYMCRIYLLTFEGHLNVHFQNYSGKKNTPFYSISLWGKEGSKISNKNFRLVTLLKMKNGRLSFFSNKVYKIDENVRNMIQPFLSIPHFGNTKTYSYPYESDNTMLFPILILIIFTLFIGFLGIPFNQDGVNLDILSKWLTPSINLLHKNSNNSIDWYEFCKDAVFSVSIASFGIFIAFFLYKPVYSSFQNLDLINSFVKTGPKRIFYDKIKNAIYDWSYNRGYIDAFYETFLTGGMRKLAKFAHFFDRRIIDGIPNGAGLMSFFVAEVIKSVGGGRISSYLFFYFSYVSICLLSYYFFNL.

Transmembrane regions (helical) follow at residues 9-29 (WIIP…LLLF), 40-60 (WAFQ…NLSI), 89-109 (IDPL…LVLI), 125-145 (FAYM…SNLI), 147-167 (IYIF…FWFT), 185-205 (GDFG…SFEF), 219-239 (NEVN…GAIA), 258-278 (TPIS…FLVA), 283-303 (LFIV…ITVF), 327-347 (LGYM…FHLI), 354-374 (ALLF…VGYC), 396-416 (ISFL…CFWS), 425-445 (WLYS…TAFY), 548-568 (LFPI…GIPF), 607-627 (VFSV…YKPV), and 723-743 (YLFF…FFNL).

The protein belongs to the complex I subunit 5 family. NDH is composed of at least 16 different subunits, 5 of which are encoded in the nucleus.

The protein resides in the plastid. Its subcellular location is the chloroplast thylakoid membrane. It carries out the reaction a plastoquinone + NADH + (n+1) H(+)(in) = a plastoquinol + NAD(+) + n H(+)(out). The enzyme catalyses a plastoquinone + NADPH + (n+1) H(+)(in) = a plastoquinol + NADP(+) + n H(+)(out). In terms of biological role, NDH shuttles electrons from NAD(P)H:plastoquinone, via FMN and iron-sulfur (Fe-S) centers, to quinones in the photosynthetic chain and possibly in a chloroplast respiratory chain. The immediate electron acceptor for the enzyme in this species is believed to be plastoquinone. Couples the redox reaction to proton translocation, and thus conserves the redox energy in a proton gradient. This Carthamus tinctorius (Safflower) protein is NAD(P)H-quinone oxidoreductase subunit 5, chloroplastic (ndhF).